The following is a 205-amino-acid chain: Ras-like protein 3 (205 aa).

16-23 lines the GTP pocket; sequence GGGGVGKS. The Effector region motif lies at 38-46; it reads YDPTIEDSY. GTP is bound by residues 63–67 and 122–125; these read DTAGQ and NKCD. At Cys202 the chain carries Cysteine methyl ester. Cys202 carries the S-farnesyl cysteine lipid modification. Residues 203–205 constitute a propeptide, removed in mature form; it reads ILM.

This sequence belongs to the small GTPase superfamily. Ras family.

The protein resides in the cell membrane. The catalysed reaction is GTP + H2O = GDP + phosphate + H(+). Alternates between an inactive form bound to GDP and an active form bound to GTP. Activated by a guanine nucleotide-exchange factor (GEF) and inactivated by a GTPase-activating protein (GAP). This Mucor circinelloides f. lusitanicus (Mucor racemosus var. lusitanicus) protein is Ras-like protein 3 (RAS3).